Consider the following 1255-residue polypeptide: Period circadian protein homolog 2 (1255 aa).

The interval 1 to 79 (MNGYAEFPPS…EPPDARQSPD (79 aa)) is disordered. Residues 35 to 56 (SSGSSGHETNENCSTGRDSQGS) are compositionally biased toward polar residues. The short motif at 111–120 (LIKTLKELKV) is the Nuclear export signal 1 element. The PAS 1 domain maps to 181-248 (VTSEHIVKNA…FHSFTSPYKL (68 aa)). The LXXLL motif lies at 308–312 (LCCLL). Residues 321–387 (YEAPRIPPEK…MLAIHKKILQ (67 aa)) enclose the PAS 2 domain. The region spanning 395 to 438 (YSPIRFRARNGEYITLDTSWSSFINPWSRKISFIIGRHKVRVGP) is the PAC domain. A Nuclear export signal 2 motif is present at residues 462–471 (LTEQIHRLLL). 2 disordered regions span residues 473–557 (PVPH…AVPA) and 617–646 (RSSD…SRTG). The interval 480–484 (SGYGS) is important for protein stability. Basic and acidic residues predominate over residues 504–516 (NGHEDSRRRRAEI). Residues 512–717 (RRAEICKNGN…ALACGLSQEK (206 aa)) are CSNK1E binding domain. Residues serine 527, serine 530, serine 533, and serine 540 each carry the phosphoserine modification. The span at 529–541 (YSHESGEQKKKSV) shows a compositional bias: basic and acidic residues. Phosphoserine occurs at positions 662, 696, 700, 714, 766, and 771. Disordered stretches follow at residues 764-838 (ERSK…DTSQ) and 931-985 (FPSH…QSRS). The short motif at 789–805 (KKTGKNRKLKSKRVKPR) is the Nuclear localization signal element. Over residues 790 to 803 (KTGKNRKLKSKRVK) the composition is skewed to basic residues. 2 stretches are compositionally biased toward polar residues: residues 829 to 838 (TAWSPSDTSQ) and 936 to 956 (TLTS…TSIP). The tract at residues 888–1071 (QFAVQPPPFP…NEDLCSASGS (184 aa)) is interaction with PPARG. At serine 945 the chain carries Phosphoserine. The span at 959 to 972 (PCACPATRATPPSA) shows a compositional bias: low complexity. Serine 977 is modified (phosphoserine). A Nuclear export signal 3 motif is present at residues 989–996 (LQLNLLQL). Residues 1018–1050 (VGADCKPGTSRDQQPKAPLTRDEPSDTQNSDAL) are disordered. The LXXLL signature appears at 1057-1061 (LNLLL). The interval 1077 to 1106 (LGSGSLGCDASPSGAGSSDTSHTSKYFGSI) is disordered. The segment covering 1090 to 1106 (GAGSSDTSHTSKYFGSI) has biased composition (polar residues). Serine 1124 bears the Phosphoserine mark. The interval 1155–1255 (SRNLEAVLKE…PLNHRIEEQT (101 aa)) is CRY binding domain. Residues 1231–1255 (GLSEVSDTKEDENGSPLNHRIEEQT) form a disordered region.

In terms of assembly, homodimer. Component of the circadian core oscillator, which includes the CRY proteins, CLOCK or NPAS2, BMAL1 or BMAL2, CSNK1D and/or CSNK1E, TIMELESS, and the PER proteins. Interacts with CLOCK-BMAL1 (off DNA). Interacts with BMAL2. Interacts directly with PER1 and PER3, and through a C-terminal domain, with CRY1 and CRY2. Interacts (via PAS 2 domain) with TIMELESS. Interacts with NFIL3. Different large complexes have been identified with different repressive functions. The core of PER complexes is composed of at least PER1, PER2, PER3, CRY1, CRY2, CSNK1D and/or CSNK1E. The large PER complex involved in the repression of transcriptional termination is composed of at least PER2, CDK9, DDX5, DHX9, NCBP1 and POLR2A (active). The large PER complex involved in the histone deacetylation is composed of at least HDAC1, PER2, SFPQ and SIN3A. The large PER complex involved in the histone methylation is composed of at least PER2, CBX3, TRIM28, SUV39H1 and/or SUV39H2; CBX3 mediates the formation of the complex. Interacts with SETX; the interaction inhibits termination of circadian target genes. Interacts with the nuclear receptors HNF4A, NR1D1, NR4A2, RORA, PPARA, PPARG and THRA; the interaction with at least PPARG is ligand dependent. Interacts with PML. Interacts (phosphorylated) with BTRC and FBXW11; the interactions trigger proteasomal degradation. Interacts with NONO and SFPQ. Interacts with CAVIN3. Interacts with MAGEL2. Interacts with MAP1LC3B. Interacts with HNF4A. Post-translationally, acetylated. Deacetylated by SIRT1, resulting in decreased protein stability. Deacetylated by SIRT6, preventing its degradation by the proteasome, resulting in increased protein stability. In terms of processing, phosphorylated by CSNK1E and CSNK1D. Phosphorylation results in PER2 protein degradation. May be dephosphorylated by PP1. Ubiquitinated, leading to its proteasomal degradation. Ubiquitination may be inhibited by CRY1. As to expression, widely expressed. Found in heart, brain, placenta, lung, liver, skeleatal muscle, kidney and pancreas. High levels in skeletal muscle and pancreas. Low levels in lung. Isoform 2 is expressed in keratinocytes (at protein level).

It is found in the nucleus. The protein localises to the cytoplasm. It localises to the perinuclear region. The protein resides in the nucleolus. Functionally, transcriptional repressor which forms a core component of the circadian clock. The circadian clock, an internal time-keeping system, regulates various physiological processes through the generation of approximately 24 hour circadian rhythms in gene expression, which are translated into rhythms in metabolism and behavior. It is derived from the Latin roots 'circa' (about) and 'diem' (day) and acts as an important regulator of a wide array of physiological functions including metabolism, sleep, body temperature, blood pressure, endocrine, immune, cardiovascular, and renal function. Consists of two major components: the central clock, residing in the suprachiasmatic nucleus (SCN) of the brain, and the peripheral clocks that are present in nearly every tissue and organ system. Both the central and peripheral clocks can be reset by environmental cues, also known as Zeitgebers (German for 'timegivers'). The predominant Zeitgeber for the central clock is light, which is sensed by retina and signals directly to the SCN. The central clock entrains the peripheral clocks through neuronal and hormonal signals, body temperature and feeding-related cues, aligning all clocks with the external light/dark cycle. Circadian rhythms allow an organism to achieve temporal homeostasis with its environment at the molecular level by regulating gene expression to create a peak of protein expression once every 24 hours to control when a particular physiological process is most active with respect to the solar day. Transcription and translation of core clock components (CLOCK, NPAS2, BMAL1, BMAL2, PER1, PER2, PER3, CRY1 and CRY2) plays a critical role in rhythm generation, whereas delays imposed by post-translational modifications (PTMs) are important for determining the period (tau) of the rhythms (tau refers to the period of a rhythm and is the length, in time, of one complete cycle). A diurnal rhythm is synchronized with the day/night cycle, while the ultradian and infradian rhythms have a period shorter and longer than 24 hours, respectively. Disruptions in the circadian rhythms contribute to the pathology of cardiovascular diseases, cancer, metabolic syndrome and aging. A transcription/translation feedback loop (TTFL) forms the core of the molecular circadian clock mechanism. Transcription factors, CLOCK or NPAS2 and BMAL1 or BMAL2, form the positive limb of the feedback loop, act in the form of a heterodimer and activate the transcription of core clock genes and clock-controlled genes (involved in key metabolic processes), harboring E-box elements (5'-CACGTG-3') within their promoters. The core clock genes: PER1/2/3 and CRY1/2 which are transcriptional repressors form the negative limb of the feedback loop and interact with the CLOCK|NPAS2-BMAL1|BMAL2 heterodimer inhibiting its activity and thereby negatively regulating their own expression. This heterodimer also activates nuclear receptors NR1D1/2 and RORA/B/G, which form a second feedback loop and which activate and repress BMAL1 transcription, respectively. PER1 and PER2 proteins transport CRY1 and CRY2 into the nucleus with appropriate circadian timing, but also contribute directly to repression of clock-controlled target genes through interaction with several classes of RNA-binding proteins, helicases and others transcriptional repressors. PER appears to regulate circadian control of transcription by at least three different modes. First, interacts directly with the CLOCK-BMAL1 at the tail end of the nascent transcript peak to recruit complexes containing the SIN3-HDAC that remodel chromatin to repress transcription. Second, brings H3K9 methyltransferases such as SUV39H1 and SUV39H2 to the E-box elements of the circadian target genes, like PER2 itself or PER1. The recruitment of each repressive modifier to the DNA seems to be very precisely temporally orchestrated by the large PER complex, the deacetylases acting before than the methyltransferases. Additionally, large PER complexes are also recruited to the target genes 3' termination site through interactions with RNA-binding proteins and helicases that may play a role in transcription termination to regulate transcription independently of CLOCK-BMAL1 interactions. Recruitment of large PER complexes to the elongating polymerase at PER and CRY termination sites inhibited SETX action, impeding RNA polymerase II release and thereby repressing transcriptional reinitiation. May propagate clock information to metabolic pathways via the interaction with nuclear receptors. Coactivator of PPARA and corepressor of NR1D1, binds rhythmically at the promoter of nuclear receptors target genes like BMAL1 or G6PC1. Directly and specifically represses PPARG proadipogenic activity by blocking PPARG recruitment to target promoters and thereby inhibiting transcriptional activation. Required for fatty acid and lipid metabolism, is involved as well in the regulation of circulating insulin levels. Plays an important role in the maintenance of cardiovascular functions through the regulation of NO and vasodilatatory prostaglandins production in aortas. Controls circadian glutamate uptake in synaptic vesicles through the regulation of VGLUT1 expression. May also be involved in the regulation of inflammatory processes. Represses the CLOCK-BMAL1 induced transcription of BHLHE40/DEC1 and ATF4. Negatively regulates the formation of the TIMELESS-CRY1 complex by competing with TIMELESS for binding to CRY1. The protein is Period circadian protein homolog 2 (PER2) of Homo sapiens (Human).